Consider the following 175-residue polypeptide: Catabolic 3-dehydroquinase (175 aa).

Tyrosine 23 functions as the Proton acceptor in the catalytic mechanism. Substrate is bound by residues asparagine 74, histidine 80, and aspartate 87. The Proton donor role is filled by histidine 100. Residues 101-102 and arginine 111 each bind substrate; that span reads IS.

This sequence belongs to the type-II 3-dehydroquinase family. In terms of assembly, homododecamer. Adopts a ring-like structure, composed of an arrangement of two hexameric rings stacked on top of one another.

The enzyme catalyses 3-dehydroquinate = 3-dehydroshikimate + H2O. The protein operates within aromatic compound metabolism; 3,4-dihydroxybenzoate biosynthesis; 3,4-dihydroxybenzoate from 3-dehydroquinate: step 1/2. Functionally, is involved in the catabolism of quinate. Allows the utilization of quinate as carbon source via the beta-ketoadipate pathway. This is Catabolic 3-dehydroquinase from Talaromyces marneffei (strain ATCC 18224 / CBS 334.59 / QM 7333) (Penicillium marneffei).